A 405-amino-acid chain; its full sequence is MLQMPSKQPISAGIVIVAAGRGERAGSPTEGPKQYRPIGGKPVIVHTLENFMTWEPATAIVVVIHPDDEALFAKAFRHIISATPIETVHGGPTRQRSVLAGLRYLKDKHVSHVLIHDAVRPFFDHTLLDRIAENLANGALAVLPAMPVTDTLKRADGAGTVLTTVSREQLFAAQTPQSFAFETILDAHEKAAASGRSDFTDDASIAEWLGIPVTIVEGTGDNVKLTVKKDIAMADDKLSASLLPDVRTGNGYDVHQLEAGDGVTLCGVFIPHDQKLKGHSDADVALHALTDALLATCGAGDIGDHFPPSDPQWKGAASRIFIEHAARIVRERGGTIMNADVSLIAEAPKVGPHREAMRANLSEYLGIDLERCSVKATTNETIGFVGRREGIAAIATATVVYRGRT.

The 2-C-methyl-D-erythritol 4-phosphate cytidylyltransferase stretch occupies residues 1-246 (MLQMPSKQPI…KLSASLLPDV (246 aa)). Residues 247–405 (RTGNGYDVHQ…TATVVYRGRT (159 aa)) are 2-C-methyl-D-erythritol 2,4-cyclodiphosphate synthase. D253 and H255 together coordinate a divalent metal cation. Residues 253–255 (DVH) and 279–280 (HS) each bind 4-CDP-2-C-methyl-D-erythritol 2-phosphate. H287 contributes to the a divalent metal cation binding site. 4-CDP-2-C-methyl-D-erythritol 2-phosphate contacts are provided by residues 301 to 303 (DIG), 377 to 380 (TTNE), F384, and R387.

The protein in the N-terminal section; belongs to the IspD/TarI cytidylyltransferase family. IspD subfamily. It in the C-terminal section; belongs to the IspF family. Requires a divalent metal cation as cofactor.

It catalyses the reaction 2-C-methyl-D-erythritol 4-phosphate + CTP + H(+) = 4-CDP-2-C-methyl-D-erythritol + diphosphate. The enzyme catalyses 4-CDP-2-C-methyl-D-erythritol 2-phosphate = 2-C-methyl-D-erythritol 2,4-cyclic diphosphate + CMP. Its pathway is isoprenoid biosynthesis; isopentenyl diphosphate biosynthesis via DXP pathway; isopentenyl diphosphate from 1-deoxy-D-xylulose 5-phosphate: step 2/6. It participates in isoprenoid biosynthesis; isopentenyl diphosphate biosynthesis via DXP pathway; isopentenyl diphosphate from 1-deoxy-D-xylulose 5-phosphate: step 4/6. In terms of biological role, bifunctional enzyme that catalyzes the formation of 4-diphosphocytidyl-2-C-methyl-D-erythritol from CTP and 2-C-methyl-D-erythritol 4-phosphate (MEP) (IspD), and catalyzes the conversion of 4-diphosphocytidyl-2-C-methyl-D-erythritol 2-phosphate (CDP-ME2P) to 2-C-methyl-D-erythritol 2,4-cyclodiphosphate (ME-CPP) with a corresponding release of cytidine 5-monophosphate (CMP) (IspF). This chain is Bifunctional enzyme IspD/IspF, found in Rhizobium etli (strain CIAT 652).